The chain runs to 388 residues: Deoxyguanosinetriphosphate triphosphohydrolase-like protein (388 aa).

Residues 1 to 32 are disordered; that stretch reads MSVGMAAPRAPYSCDPDRSRGRLFAEPPSRTR. Positions 69 to 205 constitute an HD domain; that stretch reads RLTHSLEVAQ…AALADDIAYD (137 aa).

Belongs to the dGTPase family. Type 2 subfamily.

This is Deoxyguanosinetriphosphate triphosphohydrolase-like protein from Bradyrhizobium sp. (strain ORS 278).